Here is a 62-residue protein sequence, read N- to C-terminus: Phyllokinin-1 (62 aa).

An N-terminal signal peptide occupies residues 1 to 19; the sequence is MSFLKKSLFLVLFLGLVSS. The propeptide occupies 20-48; sequence SICEEEKRETEEEENEDEIEEESEEKKRE. The tract at residues 22–62 is disordered; sequence CEEEKRETEEEENEDEIEEESEEKKREDPERPPGFTPFRVY. Positions 30–42 are enriched in acidic residues; that stretch reads EEEENEDEIEEES. Residues 43 to 52 show a composition bias toward basic and acidic residues; that stretch reads EEKKREDPER. Tyr62 carries the post-translational modification Sulfotyrosine; partial.

It belongs to the frog skin active peptide (FSAP) family. Bradykinin-related peptide subfamily. In terms of processing, asp,Pro,Glu-[Thr6,Val10]-phyllokinin and [Thr6,Val10]-phyllokinin occur in sulfated and nonsulfated forms. [Thr6]-bradykinin and Des-Arg-[Thr6]-bradykinin are nonsulfated. As to expression, expressed by the skin glands.

Its subcellular location is the secreted. Functionally, inhibits ACE with a Ki of 1.6 uM, and targets B2 bradykinin receptor (BDKRB2). Provokes contraction of smooth muscle preparation (ileum). In vivo, induces an early hyperalgesic effects in living rats after intraplantar injection. The sequence is that of Phyllokinin-1 from Pithecopus azureus (Orange-legged monkey tree frog).